A 702-amino-acid chain; its full sequence is Elongation factor G (702 aa).

In terms of domain architecture, tr-type G spans 8 to 290 (ARYRNIGISA…AVIEYLPAPT (283 aa)). Residues 17 to 24 (AHIDAGKT), 88 to 92 (DTPGH), and 142 to 145 (NKMD) each bind GTP.

This sequence belongs to the TRAFAC class translation factor GTPase superfamily. Classic translation factor GTPase family. EF-G/EF-2 subfamily.

The protein resides in the cytoplasm. Catalyzes the GTP-dependent ribosomal translocation step during translation elongation. During this step, the ribosome changes from the pre-translocational (PRE) to the post-translocational (POST) state as the newly formed A-site-bound peptidyl-tRNA and P-site-bound deacylated tRNA move to the P and E sites, respectively. Catalyzes the coordinated movement of the two tRNA molecules, the mRNA and conformational changes in the ribosome. In Photorhabdus laumondii subsp. laumondii (strain DSM 15139 / CIP 105565 / TT01) (Photorhabdus luminescens subsp. laumondii), this protein is Elongation factor G.